Reading from the N-terminus, the 445-residue chain is Rab GDP dissociation inhibitor beta (445 aa).

M1 is subject to N-acetylmethionine. K57 is modified (N6-succinyllysine). The residue at position 112 (K112) is an N6-acetyllysine. S130 carries the post-translational modification Phosphoserine. Position 269 is an N6-acetyllysine (K269). S382 carries the post-translational modification Phosphoserine.

This sequence belongs to the Rab GDI family. Interacts with RHOH. Interacts with the GDP-bound inactive forms of RAB3A, RAB3B, RAB3C, RAB5A, RAB5B, RAB5C, RAB8A, RAB8B, RAB10, RAB12, RAB35, and RAB43; binds RAB3D to a lesser extent. Interacts with DZIP1; this interaction negatively regulates the interaction of GDI2 with GDP-bound RAB8A.

It localises to the cytoplasm. Its subcellular location is the membrane. The protein localises to the golgi apparatus. The protein resides in the trans-Golgi network. In terms of biological role, GDP-dissociation inhibitor preventing the GDP to GTP exchange of most Rab proteins. By keeping these small GTPases in their inactive GDP-bound form regulates intracellular membrane trafficking. Negatively regulates protein transport to the cilium and ciliogenesis through the inhibition of RAB8A. This Canis lupus familiaris (Dog) protein is Rab GDP dissociation inhibitor beta (GDI2).